Reading from the N-terminus, the 535-residue chain is L-aspartate oxidase (535 aa).

FAD is bound by residues 16–19 (SGAA), Lys38, 45–52 (ATFYAQGG), and Asp223. Arg290 (proton donor/acceptor) is an active-site residue. FAD is bound by residues Glu375 and 391–392 (SL).

It belongs to the FAD-dependent oxidoreductase 2 family. NadB subfamily. FAD serves as cofactor.

The protein localises to the cytoplasm. It carries out the reaction L-aspartate + O2 = iminosuccinate + H2O2. Its pathway is cofactor biosynthesis; NAD(+) biosynthesis; iminoaspartate from L-aspartate (oxidase route): step 1/1. Its function is as follows. Catalyzes the oxidation of L-aspartate to iminoaspartate, the first step in the de novo biosynthesis of NAD(+). The protein is L-aspartate oxidase (nadB) of Vibrio cholerae serotype O1 (strain ATCC 39315 / El Tor Inaba N16961).